Consider the following 681-residue polypeptide: Potassium-transporting ATPase ATP-binding subunit (681 aa).

4 helical membrane passes run 30–50 (LLVY…FFGI), 59–79 (LAIA…EAIA), 216–236 (ILLV…LPFT), and 255–275 (IALL…SIGI). Catalysis depends on Asp306, which acts as the 4-aspartylphosphate intermediate. Residues Asp343, Glu347, 376 to 383 (FTATTRMS), and Lys394 each bind ATP. Positions 517 and 521 each coordinate Mg(2+). The next 3 helical transmembrane spans lie at 587–607 (FAII…LNLM), 615–635 (AILS…PLSL), and 661–681 (LIAP…LGIV).

Belongs to the cation transport ATPase (P-type) (TC 3.A.3) family. Type IA subfamily. The system is composed of three essential subunits: KdpA, KdpB and KdpC.

The protein resides in the cell membrane. The catalysed reaction is K(+)(out) + ATP + H2O = K(+)(in) + ADP + phosphate + H(+). Part of the high-affinity ATP-driven potassium transport (or Kdp) system, which catalyzes the hydrolysis of ATP coupled with the electrogenic transport of potassium into the cytoplasm. This subunit is responsible for energy coupling to the transport system and for the release of the potassium ions to the cytoplasm. The protein is Potassium-transporting ATPase ATP-binding subunit of Listeria monocytogenes serotype 4b (strain CLIP80459).